Here is a 616-residue protein sequence, read N- to C-terminus: Replication protein A 70 kDa DNA-binding subunit (616 aa).

M1 carries the post-translational modification N-acetylmethionine. Glycyl lysine isopeptide (Lys-Gly) (interchain with G-Cter in ubiquitin) cross-links involve residues K22 and K88. A disordered region spans residues 121 to 154 (GLGQPQVAPPAPAASPAASSRPQPQNGSSGMGST). Residues 134-145 (ASPAASSRPQPQ) are compositionally biased toward low complexity. N6-acetyllysine; alternate is present on residues K163 and K167. Glycyl lysine isopeptide (Lys-Gly) (interchain with G-Cter in ubiquitin); alternate cross-links involve residues K163 and K167. A Phosphothreonine modification is found at T180. K183 participates in a covalent cross-link: Glycyl lysine isopeptide (Lys-Gly) (interchain with G-Cter in ubiquitin). T191 bears the Phosphothreonine mark. The segment at residues 197–281 (WTICARVTNK…VKNDYEMTFN (85 aa)) is a DNA-binding region (OB). Glycyl lysine isopeptide (Lys-Gly) (interchain with G-Cter in ubiquitin) cross-links involve residues K220 and K244. K259 carries the post-translational modification N6-acetyllysine; alternate. K259 is covalently cross-linked (Glycyl lysine isopeptide (Lys-Gly) (interchain with G-Cter in ubiquitin); alternate). Glycyl lysine isopeptide (Lys-Gly) (interchain with G-Cter in ubiquitin) cross-links involve residues K267 and K331. At S384 the chain carries Phosphoserine. Glycyl lysine isopeptide (Lys-Gly) (interchain with G-Cter in ubiquitin) cross-links involve residues K410 and K431. Residue K449 forms a Glycyl lysine isopeptide (Lys-Gly) (interchain with G-Cter in SUMO) linkage. Residue K458 forms a Glycyl lysine isopeptide (Lys-Gly) (interchain with G-Cter in ubiquitin) linkage. A C4-type zinc finger spans residues 481-503 (CPTQDCNKKVIDQQNGLYRCEKC). A Glycyl lysine isopeptide (Lys-Gly) (interchain with G-Cter in ubiquitin) cross-link involves residue K553. K577 is covalently cross-linked (Glycyl lysine isopeptide (Lys-Gly) (interchain with G-Cter in SUMO)).

The protein belongs to the replication factor A protein 1 family. Component of the canonical replication protein A complex (RPA), a heterotrimer composed of RPA1, RPA2 and RPA3. Also a component of the aRPA, the alternative replication protein A complex, a trimeric complex similar to the replication protein A complex/RPA but where RPA1 and RPA3 are associated with RPA4 instead of RPA2. The DNA-binding activity may reside exclusively on the RPA1 subunit. Interacts with PRPF19; the PRP19-CDC5L complex is recruited to the sites of DNA repair where it ubiquitinates the replication protein A complex (RPA). Interacts with RIPK1. Interacts with the polymerase alpha subunit POLA1/p180; this interaction stabilizes the replicative complex and reduces the misincorporation rate of DNA polymerase alpha by acting as a fidelity clamp. Interacts with RAD51 and SENP6 to regulate DNA repair. Interacts with HELB; this interaction promotes HELB recruitment to chromatin following DNA damage. Interacts with PRIMPOL; leading to recruit PRIMPOL on chromatin and stimulate its DNA primase activity. Interacts with XPA; the interaction is direct and associates XPA with the RPA complex. Interacts with ETAA1; the interaction is direct and promotes ETAA1 recruitment at stalled replication forks. Interacts with RPA1; this interaction associates HROB with the RPA complex. Interacts (when poly-ADP-ribosylated) with HTATSF1. Interacts with BRIP1/FANCJ via this RPA1 subunit; following DNA damage they colocalize in foci in the nucleus. In terms of processing, DNA damage-induced 'Lys-63'-linked polyubiquitination by PRPF19 mediates ATRIP recruitment to the RPA complex at sites of DNA damage and activation of ATR. Ubiquitinated by RFWD3 at stalled replication forks in response to DNA damage: ubiquitination by RFWD3 does not lead to degradation by the proteasome and promotes removal of the RPA complex from stalled replication forks, promoting homologous recombination. Post-translationally, sumoylated on lysine residues Lys-449 and Lys-577, with Lys-449 being the major site. Sumoylation promotes recruitment of RAD51 to the DNA damage foci to initiate DNA repair through homologous recombination. Desumoylated by SENP6. Poly-ADP-ribosylated by PARP1; promoting recruitment of HTATSF1.

It is found in the nucleus. The protein resides in the PML body. Functionally, as part of the heterotrimeric replication protein A complex (RPA/RP-A), binds and stabilizes single-stranded DNA intermediates that form during DNA replication or upon DNA stress. It prevents their reannealing and in parallel, recruits and activates different proteins and complexes involved in DNA metabolism. Thereby, it plays an essential role both in DNA replication and the cellular response to DNA damage. In the cellular response to DNA damage, the RPA complex controls DNA repair and DNA damage checkpoint activation. Through recruitment of ATRIP activates the ATR kinase a master regulator of the DNA damage response. It is required for the recruitment of the DNA double-strand break repair factors RAD51 and RAD52 to chromatin in response to DNA damage. Also recruits to sites of DNA damage proteins like XPA and XPG that are involved in nucleotide excision repair and is required for this mechanism of DNA repair. Also plays a role in base excision repair (BER) probably through interaction with UNG. Also recruits SMARCAL1/HARP, which is involved in replication fork restart, to sites of DNA damage. Plays a role in telomere maintenance. As part of the alternative replication protein A complex, aRPA, binds single-stranded DNA and probably plays a role in DNA repair. Compared to the RPA2-containing, canonical RPA complex, may not support chromosomal DNA replication and cell cycle progression through S-phase. The aRPA may not promote efficient priming by DNA polymerase alpha but could support DNA synthesis by polymerase delta in presence of PCNA and replication factor C (RFC), the dual incision/excision reaction of nucleotide excision repair and RAD51-dependent strand exchange. RPA stimulates 5'-3' helicase activity of the BRIP1/FANCJ. This Homo sapiens (Human) protein is Replication protein A 70 kDa DNA-binding subunit (RPA1).